Consider the following 89-residue polypeptide: Small ribosomal subunit protein uS15 (89 aa).

It belongs to the universal ribosomal protein uS15 family. Part of the 30S ribosomal subunit. Forms a bridge to the 50S subunit in the 70S ribosome, contacting the 23S rRNA.

Its function is as follows. One of the primary rRNA binding proteins, it binds directly to 16S rRNA where it helps nucleate assembly of the platform of the 30S subunit by binding and bridging several RNA helices of the 16S rRNA. In terms of biological role, forms an intersubunit bridge (bridge B4) with the 23S rRNA of the 50S subunit in the ribosome. The sequence is that of Small ribosomal subunit protein uS15 from Carboxydothermus hydrogenoformans (strain ATCC BAA-161 / DSM 6008 / Z-2901).